We begin with the raw amino-acid sequence, 287 residues long: Formamidopyrimidine-DNA glycosylase (287 aa).

The Schiff-base intermediate with DNA role is filled by P2. E3 functions as the Proton donor in the catalytic mechanism. The active-site Proton donor; for beta-elimination activity is K61. 3 residues coordinate DNA: H95, R115, and R157. An FPG-type zinc finger spans residues 243–277 (NVYGRADQPCRRCGTPVRREAFMNRSSYSCPRCQP). R267 functions as the Proton donor; for delta-elimination activity in the catalytic mechanism.

The protein belongs to the FPG family. As to quaternary structure, monomer. Requires Zn(2+) as cofactor.

The enzyme catalyses Hydrolysis of DNA containing ring-opened 7-methylguanine residues, releasing 2,6-diamino-4-hydroxy-5-(N-methyl)formamidopyrimidine.. The catalysed reaction is 2'-deoxyribonucleotide-(2'-deoxyribose 5'-phosphate)-2'-deoxyribonucleotide-DNA = a 3'-end 2'-deoxyribonucleotide-(2,3-dehydro-2,3-deoxyribose 5'-phosphate)-DNA + a 5'-end 5'-phospho-2'-deoxyribonucleoside-DNA + H(+). Its function is as follows. Involved in base excision repair of DNA damaged by oxidation or by mutagenic agents. Acts as a DNA glycosylase that recognizes and removes damaged bases. Has a preference for oxidized purines, such as 7,8-dihydro-8-oxoguanine (8-oxoG). Has AP (apurinic/apyrimidinic) lyase activity and introduces nicks in the DNA strand. Cleaves the DNA backbone by beta-delta elimination to generate a single-strand break at the site of the removed base with both 3'- and 5'-phosphates. In Salinispora arenicola (strain CNS-205), this protein is Formamidopyrimidine-DNA glycosylase.